The primary structure comprises 486 residues: Vacuolar-processing enzyme beta-isozyme (486 aa).

Residues M1–A21 form the signal peptide. Residue H169 is part of the active site. C211 acts as the Nucleophile in catalysis. The cysteines at positions 244 and 258 are disulfide-linked. An N-linked (GlcNAc...) asparagine glycan is attached at N309. 2 disulfides stabilise this stretch: C420-C450 and C432-C467.

This sequence belongs to the peptidase C13 family. Post-translationally, auto-catalytic activation. Seed specific. Also expressed in the flowers and buds.

The protein localises to the vacuole. It is found in the protein storage vacuole. The catalysed reaction is Hydrolysis of proteins and small molecule substrates at -Asn-|-Xaa- bonds.. Asparagine-specific endopeptidase involved in the processing of vacuolar seed protein precursors into the mature forms. Probably involved in post-translational proteolysis of seed storage proteins in the protein storage vacuole of developing seeds. This chain is Vacuolar-processing enzyme beta-isozyme, found in Arabidopsis thaliana (Mouse-ear cress).